We begin with the raw amino-acid sequence, 234 residues long: Purine nucleoside phosphorylase DeoD-type (234 aa).

H4 provides a ligand contact to a purine D-ribonucleoside. Phosphate is bound by residues G20, R24, R43, and 87–90 (RVGT). A purine D-ribonucleoside-binding positions include 179-181 (EME) and 203-204 (SN).

The protein belongs to the PNP/UDP phosphorylase family. As to quaternary structure, homohexamer; trimer of homodimers.

It carries out the reaction a purine D-ribonucleoside + phosphate = a purine nucleobase + alpha-D-ribose 1-phosphate. The enzyme catalyses a purine 2'-deoxy-D-ribonucleoside + phosphate = a purine nucleobase + 2-deoxy-alpha-D-ribose 1-phosphate. Catalyzes the reversible phosphorolytic breakdown of the N-glycosidic bond in the beta-(deoxy)ribonucleoside molecules, with the formation of the corresponding free purine bases and pentose-1-phosphate. The polypeptide is Purine nucleoside phosphorylase DeoD-type (Latilactobacillus sakei subsp. sakei (strain 23K) (Lactobacillus sakei subsp. sakei)).